A 358-amino-acid polypeptide reads, in one-letter code: UPF0575 protein C19orf67 (358 aa).

The disordered stretch occupies residues 1-84; it reads MATEQWFEGS…PGPAPPRLSL (84 aa). Pro residues-rich tracts occupy residues 17–32 and 70–80; these read ETPP…PPCG and PLVPRPGPAPP.

It belongs to the UPF0575 family.

This Homo sapiens (Human) protein is UPF0575 protein C19orf67 (C19orf67).